The primary structure comprises 231 residues: NADH-ubiquinone oxidoreductase chain 4 (231 aa).

6 consecutive transmembrane segments (helical) span residues 1-21 (PIAGSMVLAAILLKLGGYGII), 34-54 (LFLPFMVLALWGAILANLTCL), 63-85 (IAYSSISHMGLVVAAIIIQTPWG), 89-111 (AMALMIAHGFTSSALFCLANTTY), 118-138 (ILILTRGLHNILPMATTWWLL), and 156-176 (LLIMSALFNWCPTTIIMLGLS).

This sequence belongs to the complex I subunit 4 family.

It localises to the mitochondrion membrane. It catalyses the reaction a ubiquinone + NADH + 5 H(+)(in) = a ubiquinol + NAD(+) + 4 H(+)(out). Its function is as follows. Core subunit of the mitochondrial membrane respiratory chain NADH dehydrogenase (Complex I) that is believed to belong to the minimal assembly required for catalysis. Complex I functions in the transfer of electrons from NADH to the respiratory chain. The immediate electron acceptor for the enzyme is believed to be ubiquinone. The polypeptide is NADH-ubiquinone oxidoreductase chain 4 (MT-ND4) (Ovophis okinavensis (Ryukyu Island pit viper)).